A 920-amino-acid chain; its full sequence is Probable transport protein MmpL7 (920 aa).

Transmembrane regions (helical) follow at residues 44–64 (LLVVAAWVAAAVIANLLLTFT), 210–230 (ITAWQSATIVTVAAVIAVLLL), 241–261 (AIVLLTADLSLAVAWPLAAVV), 271–291 (VFSWTLAAVLTIGTITAATML), 311–331 (LPAFALPGACVAIFTGPLLLA), 344–364 (LGVFVALAASLTVLPALIALA), 389–409 (SASALGTAAVLAICMLPIIGM), 761–781 (LIHDAVLLAVILLTVVALASM), 790–810 (AVGVGVLASYLAALGVSIALW), 822–842 (VPLVSFAVLASCGVPYLVAGI), 864–884 (GAVAPLAALGGVFGAGLVLVS), and 888–908 (FSVLSQIGTVVVLGLGVLITV).

The protein belongs to the resistance-nodulation-cell division (RND) (TC 2.A.6) family. MmpL subfamily.

It localises to the cell membrane. In Mycobacterium bovis (strain ATCC BAA-935 / AF2122/97), this protein is Probable transport protein MmpL7 (mmpL7).